A 357-amino-acid polypeptide reads, in one-letter code: Dihydroorotate dehydrogenase (quinone) (357 aa).

Residues A67–K71 and T91 contribute to the FMN site. A substrate-binding site is contributed by K71. N116–F120 is a binding site for substrate. 2 residues coordinate FMN: N153 and N186. N186 lines the substrate pocket. The active-site Nucleophile is S189. N191 provides a ligand contact to substrate. The FMN site is built by K228 and T256. N257–T258 lines the substrate pocket. Residues G282, G311, and Y332–T333 each bind FMN.

This sequence belongs to the dihydroorotate dehydrogenase family. Type 2 subfamily. In terms of assembly, monomer. Requires FMN as cofactor.

It is found in the cell membrane. It carries out the reaction (S)-dihydroorotate + a quinone = orotate + a quinol. Its pathway is pyrimidine metabolism; UMP biosynthesis via de novo pathway; orotate from (S)-dihydroorotate (quinone route): step 1/1. Its function is as follows. Catalyzes the conversion of dihydroorotate to orotate with quinone as electron acceptor. The protein is Dihydroorotate dehydrogenase (quinone) of Arthrobacter sp. (strain FB24).